Here is a 764-residue protein sequence, read N- to C-terminus: Nucleolar transcription factor 1 (764 aa).

Methionine 1 is subject to N-acetylmethionine. Residues 1 to 21 (MNGEADCPTDLEMAAPKGQDR) form a disordered region. DNA-binding regions (HMG box) lie at residues 112–180 (PKKP…ARFR) and 196–264 (PEKP…RDYI). Residue threonine 201 is modified to Phosphothreonine. A phosphoserine mark is found at serine 273, serine 336, and serine 364. Residues 298–362 (TKPPPNSYSL…DYEVELLRFL (65 aa)) constitute a DNA-binding region (HMG box 3). Positions 370–379 (QQRVLGEEKM) are enriched in basic and acidic residues. Positions 370–411 (QQRVLGEEKMLNINKKQTTSPASKKPSQEGGKGGSEKPKRPV) are disordered. A phosphoserine mark is found at serine 389, serine 412, serine 433, serine 435, serine 484, serine 495, serine 546, serine 584, and serine 638. 3 DNA-binding regions (HMG box) span residues 407 to 475 (PKRP…GGER), 482 to 549 (PESP…SEMR), and 568 to 634 (KKPP…DLWV). The tract at residues 456–488 (YKAREAALKAQSERKPGGEREDRGKLPESPKRA) is disordered. A compositionally biased stretch (basic and acidic residues) spans 457 to 488 (KAREAALKAQSERKPGGEREDRGKLPESPKRA). Residues 546 to 576 (SEMRAPPAATNSSKKMKFQGEPKKPPMNGYQ) form a disordered region. The tract at residues 648-764 (YISNKRKNMT…SGDSSDSDSN (117 aa)) is disordered. Polar residues predominate over residues 664–674 (PKSSRTTLQSK). The segment covering 677 to 745 (SEEDDDEEDD…DDDEDEDNES (69 aa)) has biased composition (acidic residues). Low complexity predominate over residues 746 to 758 (EGSSSSSSSSGDS).

As to quaternary structure, homodimer. Part of Pol I pre-initiation complex (PIC), in which Pol I core assembles with RRN3 and promoter-bound UTBF and SL1/TIF-IB complex. Interacts with TOP2A in the context of Pol I complex. Interacts with TBP. Interacts with TAF1A. Interacts with PHF6. Interacts with CEBPA (isoform 1 and isoform 4). Interacts with DDX11. Interacts with NOP53. Interacts with RASL11A. Interacts with DHX33. Binds to IRS1 and PIK3CA. Interacts with ALKBH2. Phosphorylated and activated by PIK3CA.

It is found in the nucleus. Its subcellular location is the nucleolus. Recognizes the ribosomal RNA gene promoter and activates transcription mediated by RNA polymerase I through cooperative interactions with the transcription factor SL1/TIF-IB complex. It binds specifically to the upstream control element. The sequence is that of Nucleolar transcription factor 1 (Ubtf) from Rattus norvegicus (Rat).